We begin with the raw amino-acid sequence, 346 residues long: Biotin synthase (346 aa).

Residues 38-256 (RQVQVSTLLS…IAIARIMMPT (219 aa)) form the Radical SAM core domain. Residues cysteine 53, cysteine 57, and cysteine 60 each contribute to the [4Fe-4S] cluster site. [2Fe-2S] cluster-binding residues include cysteine 97, cysteine 128, cysteine 188, and arginine 260.

It belongs to the radical SAM superfamily. Biotin synthase family. Homodimer. The cofactor is [4Fe-4S] cluster. It depends on [2Fe-2S] cluster as a cofactor.

The catalysed reaction is (4R,5S)-dethiobiotin + (sulfur carrier)-SH + 2 reduced [2Fe-2S]-[ferredoxin] + 2 S-adenosyl-L-methionine = (sulfur carrier)-H + biotin + 2 5'-deoxyadenosine + 2 L-methionine + 2 oxidized [2Fe-2S]-[ferredoxin]. It participates in cofactor biosynthesis; biotin biosynthesis; biotin from 7,8-diaminononanoate: step 2/2. Its function is as follows. Catalyzes the conversion of dethiobiotin (DTB) to biotin by the insertion of a sulfur atom into dethiobiotin via a radical-based mechanism. This Klebsiella pneumoniae (strain 342) protein is Biotin synthase.